The following is a 204-amino-acid chain: Small ribosomal subunit protein uS4 (204 aa).

Residues 92–157 (RRLDALVLRS…KPLFEVAREG (66 aa)) form the S4 RNA-binding domain.

This sequence belongs to the universal ribosomal protein uS4 family. Part of the 30S ribosomal subunit. Contacts protein S5. The interaction surface between S4 and S5 is involved in control of translational fidelity.

Its function is as follows. One of the primary rRNA binding proteins, it binds directly to 16S rRNA where it nucleates assembly of the body of the 30S subunit. With S5 and S12 plays an important role in translational accuracy. The sequence is that of Small ribosomal subunit protein uS4 from Streptomyces avermitilis (strain ATCC 31267 / DSM 46492 / JCM 5070 / NBRC 14893 / NCIMB 12804 / NRRL 8165 / MA-4680).